The primary structure comprises 183 residues: MKNVTHSFVFLAHWPFAGSFGLNTDILATNLINLTVVVGVLIFFGKGVLKDLLDNRKQRILSTIRNSEELRRGTLEQLEKARIRLQKVELEADEYRMNGYSEIEREKENLINATSISLEQLEKSKNETLFYEKQRAMNQVRQRVFQQAVQGALGTLNSCLNTELHFRTIRANIGILGAIEWKR.

Residues 25–45 form a helical membrane-spanning segment; the sequence is DILATNLINLTVVVGVLIFFG.

It belongs to the ATPase B chain family. As to quaternary structure, F-type ATPases have 2 components, F(1) - the catalytic core - and F(0) - the membrane proton channel. F(1) has five subunits: alpha(3), beta(3), gamma(1), delta(1), epsilon(1). F(0) has four main subunits: a(1), b(1), b'(1) and c(10-14). The alpha and beta chains form an alternating ring which encloses part of the gamma chain. F(1) is attached to F(0) by a central stalk formed by the gamma and epsilon chains, while a peripheral stalk is formed by the delta, b and b' chains.

Its subcellular location is the plastid. It localises to the chloroplast thylakoid membrane. In terms of biological role, f(1)F(0) ATP synthase produces ATP from ADP in the presence of a proton or sodium gradient. F-type ATPases consist of two structural domains, F(1) containing the extramembraneous catalytic core and F(0) containing the membrane proton channel, linked together by a central stalk and a peripheral stalk. During catalysis, ATP synthesis in the catalytic domain of F(1) is coupled via a rotary mechanism of the central stalk subunits to proton translocation. Its function is as follows. Component of the F(0) channel, it forms part of the peripheral stalk, linking F(1) to F(0). In Sorghum bicolor (Sorghum), this protein is ATP synthase subunit b, chloroplastic.